We begin with the raw amino-acid sequence, 353 residues long: GDSL esterase/lipase APG (353 aa).

A signal peptide spans 1-25 (MDRCTSSFLLLTLVSTLSILQISFA). The active-site Nucleophile is S37. N197 and N320 each carry an N-linked (GlcNAc...) asparagine glycan. Catalysis depends on residues D328 and H331.

The protein belongs to the 'GDSL' lipolytic enzyme family.

Its subcellular location is the secreted. This chain is GDSL esterase/lipase APG (APG), found in Arabidopsis thaliana (Mouse-ear cress).